Here is a 262-residue protein sequence, read N- to C-terminus: Type III pantothenate kinase (262 aa).

Residue 6–13 (DVGNTNAV) participates in ATP binding. Residues tyrosine 100 and 107–110 (GADR) each bind substrate. Aspartate 109 serves as the catalytic Proton acceptor. Residue aspartate 129 participates in K(+) binding. Threonine 132 is a binding site for ATP. Substrate is bound at residue threonine 184.

This sequence belongs to the type III pantothenate kinase family. Homodimer. The cofactor is NH4(+). K(+) serves as cofactor.

Its subcellular location is the cytoplasm. It catalyses the reaction (R)-pantothenate + ATP = (R)-4'-phosphopantothenate + ADP + H(+). The protein operates within cofactor biosynthesis; coenzyme A biosynthesis; CoA from (R)-pantothenate: step 1/5. In terms of biological role, catalyzes the phosphorylation of pantothenate (Pan), the first step in CoA biosynthesis. This chain is Type III pantothenate kinase, found in Bacillus cereus (strain G9842).